The chain runs to 279 residues: MTPAQSQARAQLSDGRYVYCVVDTTSVPSASVGETTGIDDETVRVVSVDGVGAVVHDCTSVYDADDIDQVKRWLVTHQQVVDDVSDVFGTPLPMRFDTVFAGGDSALTDWLADTHPRLRTELDGFAGCWEYRVTLLWDPQPFEAHVTATDDTLQALEARQAEADAGTTFLLEKQYDARLAERRRARRSALASDLSAAVEPVATQVASQDTTTSLRDESVSERHTPIARLAVLAPETDESALGSQLDDIAARDGVTIRFTGPWPPYTFAPDICTDEPNQA.

The protein belongs to the gas vesicle GvpF/GvpL family. As to quaternary structure, gvpF to GvpM interact with each other in vitro, and may form multi-subunit complex(es). Interacts with GvpC, GvpN and GvpO.

It localises to the gas vesicle. Its function is as follows. Proteins GvpF to GvpM might be involved in nucleating gas vesicle formation. A minor component of the gas vesicle. Gas vesicles are hollow, gas filled proteinaceous nanostructures found in several microbial planktonic microorganisms. They allow positioning of halobacteria at the optimal depth for growth in the poorly aerated, shallow brine pools of their habitat. Functionally, expression of 2 c-vac DNA fragments containing 2 divergently transcribed regions (gvpE-gvpF-gvpG-gvpH-gvpI-gvpJ-gvpK-gvpL-gvpM and gvpA-gvpC-gvpN-gvpO) allows H.volcanii to produce gas vesicles. This chain is Gas vesicle protein L2, found in Halobacterium salinarum (strain ATCC 700922 / JCM 11081 / NRC-1) (Halobacterium halobium).